The following is a 223-amino-acid chain: Sigma non-opioid intracellular receptor 1 (223 aa).

At 1-9 the chain is on the lumenal side; sequence MQWAVGRRW. Positions 2 to 8 are targeting to endoplasmic reticulum-associated lipid droplets; it reads QWAVGRR. The helical transmembrane segment at 10–30 threads the bilayer; that stretch reads AWAALLLAVAAVLTQVVWLWL. At 31 to 223 the chain is on the cytoplasmic side; the sequence is GTQSFVFQRE…LTTYLFGQDP (193 aa). Positions 99–106 are important for ligand-binding; it reads SLSEYVLL. A C-terminal hydrophobic region region spans residues 177-223; sequence VIPSTLAFALADTVFSTQDFLTLFYTLRSYARGLRLELTTYLFGQDP.

The protein belongs to the ERG2 family. Homotrimer. Forms a ternary complex with ANK2 and ITPR3. The complex is disrupted by agonists. Interacts with KCNA4. Interacts with KCNA2; cocaine consumption leads to increased interaction. Interacts with RNF112 in an oxidative stress-regulated manner. Widely expressed with higher expression in liver, colon, prostate, placenta, small intestine, heart and pancreas. Expressed in the retina by retinal pigment epithelial cells. Expressed in alpha-motor neurons.

The protein localises to the nucleus inner membrane. Its subcellular location is the nucleus outer membrane. It is found in the nucleus envelope. The protein resides in the cytoplasmic vesicle. It localises to the endoplasmic reticulum membrane. The protein localises to the membrane. Its subcellular location is the lipid droplet. It is found in the cell junction. The protein resides in the cell membrane. It localises to the cell projection. The protein localises to the growth cone. Its subcellular location is the postsynaptic density membrane. Functionally, functions in lipid transport from the endoplasmic reticulum and is involved in a wide array of cellular functions probably through regulation of the biogenesis of lipid microdomains at the plasma membrane. Involved in the regulation of different receptors it plays a role in BDNF signaling and EGF signaling. Also regulates ion channels like the potassium channel and could modulate neurotransmitter release. Plays a role in calcium signaling through modulation together with ANK2 of the ITP3R-dependent calcium efflux at the endoplasmic reticulum. Plays a role in several other cell functions including proliferation, survival and death. Originally identified for its ability to bind various psychoactive drugs it is involved in learning processes, memory and mood alteration. Necessary for proper mitochondrial axonal transport in motor neurons, in particular the retrograde movement of mitochondria. Plays a role in protecting cells against oxidative stress-induced cell death via its interaction with RNF112. In Homo sapiens (Human), this protein is Sigma non-opioid intracellular receptor 1 (SIGMAR1).